The primary structure comprises 162 residues: Protein archease (162 aa).

The Ca(2+) site is built by D34, D161, and I162.

Belongs to the archease family. Component of the tRNA-splicing ligase complex.

Functionally, component of the tRNA-splicing ligase complex required to facilitate the enzymatic turnover of catalytic subunit RTCB. Together with ddx1, acts by facilitating the guanylylation of RTCB, a key intermediate step in tRNA ligation. The chain is Protein archease (zbtb8os) from Danio rerio (Zebrafish).